Here is an 82-residue protein sequence, read N- to C-terminus: ATP synthase subunit c (82 aa).

2 consecutive transmembrane segments (helical) span residues 7–27 and 57–77; these read AASV…PGIG and FAFM…LLFA.

It belongs to the ATPase C chain family. As to quaternary structure, F-type ATPases have 2 components, F(1) - the catalytic core - and F(0) - the membrane proton channel. F(1) has five subunits: alpha(3), beta(3), gamma(1), delta(1), epsilon(1). F(0) has four main subunits: a(1), b(1), b'(1) and c(10-14). The alpha and beta chains form an alternating ring which encloses part of the gamma chain. F(1) is attached to F(0) by a central stalk formed by the gamma and epsilon chains, while a peripheral stalk is formed by the delta, b and b' chains.

It is found in the cellular thylakoid membrane. Functionally, f(1)F(0) ATP synthase produces ATP from ADP in the presence of a proton or sodium gradient. F-type ATPases consist of two structural domains, F(1) containing the extramembraneous catalytic core and F(0) containing the membrane proton channel, linked together by a central stalk and a peripheral stalk. During catalysis, ATP synthesis in the catalytic domain of F(1) is coupled via a rotary mechanism of the central stalk subunits to proton translocation. Key component of the F(0) channel; it plays a direct role in translocation across the membrane. A homomeric c-ring of between 10-14 subunits forms the central stalk rotor element with the F(1) delta and epsilon subunits. This Prochlorococcus marinus (strain MIT 9303) protein is ATP synthase subunit c.